A 167-amino-acid polypeptide reads, in one-letter code: Phosphopantetheine adenylyltransferase (167 aa).

S10 contributes to the substrate binding site. ATP is bound by residues 10–11 and H18; that span reads SF. Residues K42, A79, and R93 each coordinate substrate. Residues 94–96, E104, and 129–135 contribute to the ATP site; these read GLR and VGHITAT.

It belongs to the bacterial CoaD family. Homohexamer. Requires Mg(2+) as cofactor.

Its subcellular location is the cytoplasm. The catalysed reaction is (R)-4'-phosphopantetheine + ATP + H(+) = 3'-dephospho-CoA + diphosphate. It participates in cofactor biosynthesis; coenzyme A biosynthesis; CoA from (R)-pantothenate: step 4/5. In terms of biological role, reversibly transfers an adenylyl group from ATP to 4'-phosphopantetheine, yielding dephospho-CoA (dPCoA) and pyrophosphate. This is Phosphopantetheine adenylyltransferase from Methylocella silvestris (strain DSM 15510 / CIP 108128 / LMG 27833 / NCIMB 13906 / BL2).